The primary structure comprises 565 residues: Proline--tRNA ligase (565 aa).

Belongs to the class-II aminoacyl-tRNA synthetase family. ProS type 1 subfamily. In terms of assembly, homodimer.

The protein resides in the cytoplasm. The enzyme catalyses tRNA(Pro) + L-proline + ATP = L-prolyl-tRNA(Pro) + AMP + diphosphate. In terms of biological role, catalyzes the attachment of proline to tRNA(Pro) in a two-step reaction: proline is first activated by ATP to form Pro-AMP and then transferred to the acceptor end of tRNA(Pro). As ProRS can inadvertently accommodate and process non-cognate amino acids such as alanine and cysteine, to avoid such errors it has two additional distinct editing activities against alanine. One activity is designated as 'pretransfer' editing and involves the tRNA(Pro)-independent hydrolysis of activated Ala-AMP. The other activity is designated 'posttransfer' editing and involves deacylation of mischarged Ala-tRNA(Pro). The misacylated Cys-tRNA(Pro) is not edited by ProRS. This is Proline--tRNA ligase from Lactobacillus delbrueckii subsp. bulgaricus (strain ATCC BAA-365 / Lb-18).